The sequence spans 382 residues: Mannitol-1-phosphate 5-dehydrogenase (382 aa).

3–14 (ALHFGAGNIGRG) is an NAD(+) binding site.

This sequence belongs to the mannitol dehydrogenase family.

It carries out the reaction D-mannitol 1-phosphate + NAD(+) = beta-D-fructose 6-phosphate + NADH + H(+). This chain is Mannitol-1-phosphate 5-dehydrogenase, found in Salmonella paratyphi A (strain ATCC 9150 / SARB42).